Reading from the N-terminus, the 108-residue chain is SPPGNWQKADVTFDSNTAFESLVVSPDKKTVENVGVSQVAPDNPERFDGSPCVLGSPGFRSGKHFFEVKYGTQREWAVGLAGKSVKRKGYLRLVPEERIWQKGLWWLG.

One can recognise a B30.2/SPRY domain in the interval 1-108 (SPPGNWQKAD…IWQKGLWWLG (108 aa)).

It belongs to the ohanin/vespryn family. In terms of tissue distribution, expressed by the venom gland.

Its subcellular location is the secreted. Neurotoxin that produces dose-dependent hypolocomotion and hyperalgesia in mice. May directly act on the central nervous system, as it is 6500-fold more potent when administered intracerebroventricularly than intraperitoneal. The sequence is that of Thaicobrin from Naja kaouthia (Monocled cobra).